The sequence spans 497 residues: Guanosine-5'-triphosphate,3'-diphosphate pyrophosphatase (497 aa).

Belongs to the GppA/Ppx family. GppA subfamily.

It carries out the reaction guanosine 3'-diphosphate 5'-triphosphate + H2O = guanosine 3',5'-bis(diphosphate) + phosphate + H(+). It functions in the pathway purine metabolism; ppGpp biosynthesis; ppGpp from GTP: step 2/2. Its function is as follows. Catalyzes the conversion of pppGpp to ppGpp. Guanosine pentaphosphate (pppGpp) is a cytoplasmic signaling molecule which together with ppGpp controls the 'stringent response', an adaptive process that allows bacteria to respond to amino acid starvation, resulting in the coordinated regulation of numerous cellular activities. The chain is Guanosine-5'-triphosphate,3'-diphosphate pyrophosphatase from Vibrio parahaemolyticus serotype O3:K6 (strain RIMD 2210633).